The sequence spans 87 residues: Translation initiation factor IF-1 2 (87 aa).

One can recognise an S1-like domain in the interval 1–72 (MAKEELLEMQ…SKGRITFRHI (72 aa)).

The protein belongs to the IF-1 family. In terms of assembly, component of the 30S ribosomal translation pre-initiation complex which assembles on the 30S ribosome in the order IF-2 and IF-3, IF-1 and N-formylmethionyl-tRNA(fMet); mRNA recruitment can occur at any time during PIC assembly.

The protein localises to the cytoplasm. Its function is as follows. One of the essential components for the initiation of protein synthesis. Stabilizes the binding of IF-2 and IF-3 on the 30S subunit to which N-formylmethionyl-tRNA(fMet) subsequently binds. Helps modulate mRNA selection, yielding the 30S pre-initiation complex (PIC). Upon addition of the 50S ribosomal subunit IF-1, IF-2 and IF-3 are released leaving the mature 70S translation initiation complex. This Dechloromonas aromatica (strain RCB) protein is Translation initiation factor IF-1 2.